A 365-amino-acid polypeptide reads, in one-letter code: Chorismate synthase (365 aa).

NADP(+) is bound by residues R48 and R54. FMN is bound by residues 131 to 133 (RSS), 243 to 244 (NA), G288, 303 to 307 (KPTSS), and R329.

It belongs to the chorismate synthase family. As to quaternary structure, homotetramer. Requires FMNH2 as cofactor.

It catalyses the reaction 5-O-(1-carboxyvinyl)-3-phosphoshikimate = chorismate + phosphate. The protein operates within metabolic intermediate biosynthesis; chorismate biosynthesis; chorismate from D-erythrose 4-phosphate and phosphoenolpyruvate: step 7/7. In terms of biological role, catalyzes the anti-1,4-elimination of the C-3 phosphate and the C-6 proR hydrogen from 5-enolpyruvylshikimate-3-phosphate (EPSP) to yield chorismate, which is the branch point compound that serves as the starting substrate for the three terminal pathways of aromatic amino acid biosynthesis. This reaction introduces a second double bond into the aromatic ring system. In Sinorhizobium medicae (strain WSM419) (Ensifer medicae), this protein is Chorismate synthase.